Here is a 304-residue protein sequence, read N- to C-terminus: Putative S-adenosyl-L-methionine-dependent methyltransferase MAP_4189c (304 aa).

S-adenosyl-L-methionine is bound by residues aspartate 130 and 159–160 (DL).

Belongs to the UPF0677 family.

Functionally, exhibits S-adenosyl-L-methionine-dependent methyltransferase activity. The chain is Putative S-adenosyl-L-methionine-dependent methyltransferase MAP_4189c from Mycolicibacterium paratuberculosis (strain ATCC BAA-968 / K-10) (Mycobacterium paratuberculosis).